Consider the following 593-residue polypeptide: Tyrosine-protein phosphatase non-receptor type 9 (593 aa).

The residue at position 1 (Met1) is an N-acetylmethionine. The tract at residues 1 to 21 (MEPATAPRPDMAPELTPEEEQ) is disordered. A CRAL-TRIO domain is found at 84-243 (EEPLRSEILS…NLGGYIKIDL (160 aa)). The Tyrosine-protein phosphatase domain occupies 303-574 (IYEEYEDIRR…YFCYKAILEF (272 aa)). Residues Asp470, 515 to 521 (CSAGIGR), and Gln559 contribute to the substrate site. The active-site Phosphocysteine intermediate is Cys515.

The protein belongs to the protein-tyrosine phosphatase family. Non-receptor class 3 subfamily.

It localises to the cytoplasm. It carries out the reaction O-phospho-L-tyrosyl-[protein] + H2O = L-tyrosyl-[protein] + phosphate. Functionally, protein-tyrosine phosphatase that could participate in the transfer of hydrophobic ligands or in functions of the Golgi apparatus. The chain is Tyrosine-protein phosphatase non-receptor type 9 (Ptpn9) from Rattus norvegicus (Rat).